A 202-amino-acid polypeptide reads, in one-letter code: Ribosome maturation factor RimM (202 aa).

Residues 121 to 202 enclose the PRC barrel domain; that stretch reads KDEYYWVDLI…CITVDWQPDY (82 aa).

Belongs to the RimM family. As to quaternary structure, binds ribosomal protein uS19.

It is found in the cytoplasm. Its function is as follows. An accessory protein needed during the final step in the assembly of 30S ribosomal subunit, possibly for assembly of the head region. Essential for efficient processing of 16S rRNA. May be needed both before and after RbfA during the maturation of 16S rRNA. It has affinity for free ribosomal 30S subunits but not for 70S ribosomes. The polypeptide is Ribosome maturation factor RimM (Polaromonas sp. (strain JS666 / ATCC BAA-500)).